The primary structure comprises 168 residues: Large ribosomal subunit protein bL17 (168 aa).

The disordered stretch occupies residues 124 to 168 (QATGEAEAATKRAAKDAEGSAEVSEAKVDTTKADDEAAAEESKDA). Basic and acidic residues predominate over residues 131 to 168 (AATKRAAKDAEGSAEVSEAKVDTTKADDEAAAEESKDA).

This sequence belongs to the bacterial ribosomal protein bL17 family. In terms of assembly, part of the 50S ribosomal subunit. Contacts protein L32.

In Streptomyces coelicolor (strain ATCC BAA-471 / A3(2) / M145), this protein is Large ribosomal subunit protein bL17.